The primary structure comprises 456 residues: Chordin-like protein 1 (456 aa).

The first 27 residues, 1–27 (MRKKWKMGGMKYIFSLLFFLLLEGGKT), serve as a signal peptide directing secretion. VWFC domains follow at residues 35 to 100 (TYCM…PRCP) and 113 to 179 (KSCE…RVCR). The N-linked (GlcNAc...) asparagine glycan is linked to asparagine 118. The Cell attachment site motif lies at 179-181 (RGD). Residues 202-223 (ARHSYHRSHYDPPPSRQAGGLS) are disordered. In terms of domain architecture, VWFC 3 spans 258-323 (QVCVSNGKTY…IDGKCCKVCP (66 aa)). N-linked (GlcNAc...) asparagine glycosylation occurs at asparagine 291.

As to expression, expressed in the developing cornea and in the eye anterior segment in addition to the retina. Differentially expressed in the fetal brain. There is high expression in cerebellum and neocortex. Expressed in retinal pericytes.

It is found in the secreted. In terms of biological role, antagonizes the function of BMP4 by binding to it and preventing its interaction with receptors. Alters the fate commitment of neural stem cells from gliogenesis to neurogenesis. Contributes to neuronal differentiation of neural stem cells in the brain by preventing the adoption of a glial fate. May play a crucial role in dorsoventral axis formation. May play a role in embryonic bone formation. May also play an important role in regulating retinal angiogenesis through modulation of BMP4 actions in endothelial cells. Plays a role during anterior segment eye development. The protein is Chordin-like protein 1 (CHRDL1) of Homo sapiens (Human).